The sequence spans 427 residues: Citrate synthase (427 aa).

Active-site residues include His-306 and Asp-363.

The protein belongs to the citrate synthase family. As to quaternary structure, homohexamer.

The catalysed reaction is oxaloacetate + acetyl-CoA + H2O = citrate + CoA + H(+). It functions in the pathway carbohydrate metabolism; tricarboxylic acid cycle; isocitrate from oxaloacetate: step 1/2. With respect to regulation, allosterically inhibited by NADH. In Salmonella typhimurium (strain LT2 / SGSC1412 / ATCC 700720), this protein is Citrate synthase (gltA).